We begin with the raw amino-acid sequence, 292 residues long: Elongation factor Ts (292 aa).

Residues 79–82 (TDFV) form an involved in Mg(2+) ion dislocation from EF-Tu region.

It belongs to the EF-Ts family.

It is found in the cytoplasm. Associates with the EF-Tu.GDP complex and induces the exchange of GDP to GTP. It remains bound to the aminoacyl-tRNA.EF-Tu.GTP complex up to the GTP hydrolysis stage on the ribosome. In Staphylococcus haemolyticus (strain JCSC1435), this protein is Elongation factor Ts.